The primary structure comprises 187 residues: Elongation factor P (187 aa).

Belongs to the elongation factor P family.

It is found in the cytoplasm. It participates in protein biosynthesis; polypeptide chain elongation. Functionally, involved in peptide bond synthesis. Stimulates efficient translation and peptide-bond synthesis on native or reconstituted 70S ribosomes in vitro. Probably functions indirectly by altering the affinity of the ribosome for aminoacyl-tRNA, thus increasing their reactivity as acceptors for peptidyl transferase. The sequence is that of Elongation factor P from Jannaschia sp. (strain CCS1).